A 288-amino-acid polypeptide reads, in one-letter code: Small ribosomal subunit protein uS2 (288 aa).

Over residues 259-276 (EAAPAAEEAPAAEAEAAA) the composition is skewed to low complexity. The disordered stretch occupies residues 259 to 288 (EAAPAAEEAPAAEAEAAATDTSSESDKTEA).

It belongs to the universal ribosomal protein uS2 family.

This chain is Small ribosomal subunit protein uS2, found in Maricaulis maris (strain MCS10) (Caulobacter maris).